A 411-amino-acid polypeptide reads, in one-letter code: MQTYLVGGAVRDALLGLKVVDKDWMVVGATPEQMLAQGYEQVGSDFPVFLHPKTKQEYALARTERKSGKGYTGFICYSAPDVTLEQDLMRRDLTINAIAQEKDGRLIDPYNGQQDLDNKILRHVSPAFVEDPLRVLRVARFSARFAHLGFTIAPETIALMQEMVVAGELEALTPERVWKEWEKSLSTENPEVFLTVLRQCGALKVVMPEIDALFGVPQPAQWHPEIDCGIHTLMVAKQAAELSPNKVIRFAAQVHDLGKALSPKDDLPSHKMHCKDGLKPIKALCQRLRVPNDYRDTALMVCAQHTKIHHANEMRPATFVNILDQIDSWRKPERVIQLALCCRADARGRTGHENDAYLQADILLAAFDAAQQVDVKPIVAAGFKGKDIKEQLAIHRTAAVELAIKPLQSKA.

Residues Gly8 and Arg11 each coordinate ATP. 2 residues coordinate CTP: Gly8 and Arg11. Asp21 and Asp23 together coordinate Mg(2+). 3 residues coordinate ATP: Arg91, Arg137, and Arg140. CTP-binding residues include Arg91, Arg137, and Arg140. One can recognise an HD domain in the interval 228–329 (CGIHTLMVAK…VNILDQIDSW (102 aa)).

The protein belongs to the tRNA nucleotidyltransferase/poly(A) polymerase family. Bacterial CCA-adding enzyme type 1 subfamily. As to quaternary structure, monomer. Can also form homodimers and oligomers. The cofactor is Mg(2+). It depends on Ni(2+) as a cofactor.

The catalysed reaction is a tRNA precursor + 2 CTP + ATP = a tRNA with a 3' CCA end + 3 diphosphate. It catalyses the reaction a tRNA with a 3' CCA end + 2 CTP + ATP = a tRNA with a 3' CCACCA end + 3 diphosphate. Catalyzes the addition and repair of the essential 3'-terminal CCA sequence in tRNAs without using a nucleic acid template. Adds these three nucleotides in the order of C, C, and A to the tRNA nucleotide-73, using CTP and ATP as substrates and producing inorganic pyrophosphate. tRNA 3'-terminal CCA addition is required both for tRNA processing and repair. Also involved in tRNA surveillance by mediating tandem CCA addition to generate a CCACCA at the 3' terminus of unstable tRNAs. While stable tRNAs receive only 3'-terminal CCA, unstable tRNAs are marked with CCACCA and rapidly degraded. The chain is Multifunctional CCA protein from Photobacterium profundum (strain SS9).